A 394-amino-acid polypeptide reads, in one-letter code: 1-deoxy-D-xylulose 5-phosphate reductoisomerase (394 aa).

7 residues coordinate NADPH: Thr12, Gly13, Ser14, Ile15, Gly38, Asn41, and Asn132. Lys133 lines the 1-deoxy-D-xylulose 5-phosphate pocket. Glu134 is an NADPH binding site. Mn(2+) is bound at residue Asp156. 4 residues coordinate 1-deoxy-D-xylulose 5-phosphate: Ser157, Glu158, Ser182, and His205. Glu158 contributes to the Mn(2+) binding site. Gly211 contacts NADPH. 4 residues coordinate 1-deoxy-D-xylulose 5-phosphate: Ser218, Asn223, Lys224, and Glu227. Position 227 (Glu227) interacts with Mn(2+).

This sequence belongs to the DXR family. The cofactor is Mg(2+). It depends on Mn(2+) as a cofactor.

The catalysed reaction is 2-C-methyl-D-erythritol 4-phosphate + NADP(+) = 1-deoxy-D-xylulose 5-phosphate + NADPH + H(+). Its pathway is isoprenoid biosynthesis; isopentenyl diphosphate biosynthesis via DXP pathway; isopentenyl diphosphate from 1-deoxy-D-xylulose 5-phosphate: step 1/6. Functionally, catalyzes the NADPH-dependent rearrangement and reduction of 1-deoxy-D-xylulose-5-phosphate (DXP) to 2-C-methyl-D-erythritol 4-phosphate (MEP). This Paenarthrobacter aurescens (strain TC1) protein is 1-deoxy-D-xylulose 5-phosphate reductoisomerase.